The primary structure comprises 479 residues: NADH oxidase (479 aa).

FAD is bound by residues 8 to 12, D33, C43, V80, 111 to 114, K149, and Y177; these read GVNHA and ASGA. The active-site Proton acceptor is H11. Residue C43 is the Redox-active of the active site. A Cysteine sulfinic acid (-SO2H) modification is found at C43. NAD(+) contacts are provided by residues 170-185, D197, and G264; that span reads VAIV…LAEA. FAD contacts are provided by residues 295–305, L322, A323, and T324; that span reads LNHENVYVIGG. A353 contacts NAD(+). Position 450 (F450) interacts with FAD.

This sequence belongs to the class-III pyridine nucleotide-disulfide oxidoreductase family. It depends on FAD as a cofactor.

The catalysed reaction is 2 NADH + O2 + 2 H(+) = 2 NAD(+) + 2 H2O. Functionally, catalyzes the four-electron reduction of molecular oxygen to water. In Mycoplasma pneumoniae (strain ATCC 29342 / M129 / Subtype 1) (Mycoplasmoides pneumoniae), this protein is NADH oxidase (nox).